The chain runs to 583 residues: Phytoene desaturase (583 aa).

The signal sequence occupies residues 1–20 (MAPPKHVIIIGAGAGGTATA). Residues 531–551 (IIWFLLIALFAATLVLFIAFP) traverse the membrane as a helical segment.

It belongs to the carotenoid/retinoid oxidoreductase family. NAD(+) serves as cofactor.

It localises to the membrane. The catalysed reaction is 15-cis-phytoene + 5 A = all-trans-3,4-didehydrolycopene + 5 AH2. The protein operates within carotenoid biosynthesis; lycopene biosynthesis. In terms of biological role, phytoene desaturase involved in the carotenoid biosynthesis pathway. Converts phytoene into 3,4-didehydrolycopene via the intermediary of phytofluene, zeta-carotene, neurosporene and lycopene, by introducing up to five double bonds into phytoene. The protein is Phytoene desaturase (carB) of Phycomyces blakesleeanus (strain ATCC 8743b / DSM 1359 / FGSC 10004 / NBRC 33097 / NRRL 1555).